The primary structure comprises 379 residues: UDP-N-acetylglucosamine--N-acetylmuramyl-(pentapeptide) pyrophosphoryl-undecaprenol N-acetylglucosamine transferase (379 aa).

UDP-N-acetyl-alpha-D-glucosamine contacts are provided by residues 17–19, Asn128, Arg169, Ser197, and Gln298; that span reads TGG.

This sequence belongs to the glycosyltransferase 28 family. MurG subfamily.

It localises to the cell inner membrane. It catalyses the reaction di-trans,octa-cis-undecaprenyl diphospho-N-acetyl-alpha-D-muramoyl-L-alanyl-D-glutamyl-meso-2,6-diaminopimeloyl-D-alanyl-D-alanine + UDP-N-acetyl-alpha-D-glucosamine = di-trans,octa-cis-undecaprenyl diphospho-[N-acetyl-alpha-D-glucosaminyl-(1-&gt;4)]-N-acetyl-alpha-D-muramoyl-L-alanyl-D-glutamyl-meso-2,6-diaminopimeloyl-D-alanyl-D-alanine + UDP + H(+). It functions in the pathway cell wall biogenesis; peptidoglycan biosynthesis. Functionally, cell wall formation. Catalyzes the transfer of a GlcNAc subunit on undecaprenyl-pyrophosphoryl-MurNAc-pentapeptide (lipid intermediate I) to form undecaprenyl-pyrophosphoryl-MurNAc-(pentapeptide)GlcNAc (lipid intermediate II). This Brucella abortus (strain S19) protein is UDP-N-acetylglucosamine--N-acetylmuramyl-(pentapeptide) pyrophosphoryl-undecaprenol N-acetylglucosamine transferase.